Reading from the N-terminus, the 110-residue chain is UPF0060 membrane protein Mfla_2554 (110 aa).

4 consecutive transmembrane segments (helical) span residues 7-27 (VALF…PYLW), 33-53 (SPLL…LLTL), 61-81 (VYAA…WVVD), and 83-103 (IIPS…MAII).

Belongs to the UPF0060 family.

It is found in the cell inner membrane. This chain is UPF0060 membrane protein Mfla_2554, found in Methylobacillus flagellatus (strain ATCC 51484 / DSM 6875 / VKM B-1610 / KT).